Reading from the N-terminus, the 247-residue chain is Phosphoribosylaminoimidazole-succinocarboxamide synthase (247 aa).

The protein belongs to the SAICAR synthetase family.

It carries out the reaction 5-amino-1-(5-phospho-D-ribosyl)imidazole-4-carboxylate + L-aspartate + ATP = (2S)-2-[5-amino-1-(5-phospho-beta-D-ribosyl)imidazole-4-carboxamido]succinate + ADP + phosphate + 2 H(+). It participates in purine metabolism; IMP biosynthesis via de novo pathway; 5-amino-1-(5-phospho-D-ribosyl)imidazole-4-carboxamide from 5-amino-1-(5-phospho-D-ribosyl)imidazole-4-carboxylate: step 1/2. The protein is Phosphoribosylaminoimidazole-succinocarboxamide synthase of Prochlorococcus marinus (strain NATL1A).